The following is a 522-amino-acid chain: Zinc finger protein 329 (522 aa).

S30 carries the phosphoserine modification. 12 C2H2-type zinc fingers span residues 184-206 (YKCAECGKCFKRNSSLVLHHRTH), 212-234 (YTCNDCGKSFSKNYNLIVHRRIH), 240-262 (YKCSKCGKAFSDGSALTQHQRIH), 268-290 (YACLDCGKTFNRNSSLILHQRTH), 296-318 (YRCNECGKPFTDISHLTVHLRIH), 324-346 (YECSRCGKAFRDGSYLTQHERTH), 352-374 (FECVECGKSFSRNSHLIVHQKIH), 380-402 (YECKECGKTFIESAYLIRHQRVH), 408-430 (YGCNQCRKLFRNIAGLIRHQRIH), 436-458 (YECNQCGKAFRDSSCLTKHQRIH), 464-486 (YQCLKCGKSFRQNTHLVVHQRLH), and 492-514 (SQCPHCGKIFRRSWCLARHQRTH).

The protein belongs to the krueppel C2H2-type zinc-finger protein family.

Its subcellular location is the nucleus. Functionally, may be involved in transcriptional regulation. This is Zinc finger protein 329 (Znf329) from Mus musculus (Mouse).